The chain runs to 213 residues: GTP cyclohydrolase 1 (213 aa).

Positions 104, 107, and 175 each coordinate Zn(2+).

Belongs to the GTP cyclohydrolase I family. As to quaternary structure, toroid-shaped homodecamer, composed of two pentamers of five dimers.

It catalyses the reaction GTP + H2O = 7,8-dihydroneopterin 3'-triphosphate + formate + H(+). The protein operates within cofactor biosynthesis; 7,8-dihydroneopterin triphosphate biosynthesis; 7,8-dihydroneopterin triphosphate from GTP: step 1/1. In Brucella anthropi (strain ATCC 49188 / DSM 6882 / CCUG 24695 / JCM 21032 / LMG 3331 / NBRC 15819 / NCTC 12168 / Alc 37) (Ochrobactrum anthropi), this protein is GTP cyclohydrolase 1.